The primary structure comprises 195 residues: 3-isopropylmalate dehydratase small subunit (195 aa).

This sequence belongs to the LeuD family. LeuD type 1 subfamily. Heterodimer of LeuC and LeuD.

The catalysed reaction is (2R,3S)-3-isopropylmalate = (2S)-2-isopropylmalate. It functions in the pathway amino-acid biosynthesis; L-leucine biosynthesis; L-leucine from 3-methyl-2-oxobutanoate: step 2/4. Functionally, catalyzes the isomerization between 2-isopropylmalate and 3-isopropylmalate, via the formation of 2-isopropylmaleate. This Frankia casuarinae (strain DSM 45818 / CECT 9043 / HFP020203 / CcI3) protein is 3-isopropylmalate dehydratase small subunit.